The following is a 630-amino-acid chain: MSSNKPYVIKGIPVDAGQIIPVRRDIDEWYEDTSRQSRIQLSIFIWALREFQSIDYKDRLSYFQIAGIHHFPLITWDEEEPPVPNKPGYCVHNNVTFPTWHRPYMLLFEQRLFEIMETTIKETVPESHKQEWRDAARQWRLPYWDFAKTSGPHATGPLSLPVLCGLANVVILNPANPETPIELPNPVYKYRAPDLMGNLDKPFHIPPERIDPDKDDYYPWDKCQATTKYGLLKNNPHIQDAGQDVTKSNLALNEHPWYRPNKAGFPPLQTLTYEVHRLLSFKFSSWGAFASTKWCNEENKPPASQQTRDILSLEYIHNNVHNWVGGTDYLGDPSKPDLQGAGHMSSVPVAAFDPIFWLYHNNVDRLTAIWQVLNQDHWFDEPHPSDAKPDDPLKPFHVSKDKYFTSDDARFWRKYGYDYDIVKKPGTNEDRAPEEVKMKINQLYGEPISRLHEGQPVEYDYVINVIYDRYALDGIPYTIVFYLHLKDGSYKCLGGVYTFSTKLSDAQDTERGGCDNCREQKKAGVLASAQIPLTYTLYERQEWHNLGKLLPVKETADIIRQHLCWKVVGVNNSILFDSEQPMRGDPATWRSLDVTAAYSEIHYPVDRNYKYIDRGLPAYHNYLPIHLSPT.

6 residues coordinate Cu cation: H69, H92, H101, H317, H321, and H360. The 2'-(S-cysteinyl)-histidine (Cys-His) cross-link spans 90–92; the sequence is CVH.

The protein belongs to the tyrosinase family. The cofactor is Cu(2+).

The enzyme catalyses 2 L-dopa + O2 = 2 L-dopaquinone + 2 H2O. The catalysed reaction is L-tyrosine + O2 = L-dopaquinone + H2O. In terms of biological role, this is a copper-containing oxidase that functions in the formation of pigments such as melanins and other polyphenolic compounds. The chain is Tyrosinase (tyr1) from Aspergillus fumigatus (strain ATCC MYA-4609 / CBS 101355 / FGSC A1100 / Af293) (Neosartorya fumigata).